We begin with the raw amino-acid sequence, 233 residues long: ATP-dependent Clp protease proteolytic subunit 2 (233 aa).

The active-site Nucleophile is Ser116. His141 is a catalytic residue. The interval 214–233 (EGLKSIQPNGEAADDSEDDA) is disordered.

It belongs to the peptidase S14 family. Fourteen ClpP subunits assemble into 2 heptameric rings which stack back to back to give a disk-like structure with a central cavity, resembling the structure of eukaryotic proteasomes.

Its subcellular location is the cytoplasm. It carries out the reaction Hydrolysis of proteins to small peptides in the presence of ATP and magnesium. alpha-casein is the usual test substrate. In the absence of ATP, only oligopeptides shorter than five residues are hydrolyzed (such as succinyl-Leu-Tyr-|-NHMec, and Leu-Tyr-Leu-|-Tyr-Trp, in which cleavage of the -Tyr-|-Leu- and -Tyr-|-Trp bonds also occurs).. Cleaves peptides in various proteins in a process that requires ATP hydrolysis. Has a chymotrypsin-like activity. Plays a major role in the degradation of misfolded proteins. In Salinibacter ruber (strain DSM 13855 / M31), this protein is ATP-dependent Clp protease proteolytic subunit 2.